The primary structure comprises 148 residues: Cystatin-D (148 aa).

The N-terminal stretch at 1-33 (MASLLSPSMPVLAAVALTLTLAVIPEASTNAEA) is a signal peptide. In terms of domain architecture, Cystatin kininogen-type spans 36-148 (VVLGGVEPAD…SMTNFNCYNF (113 aa)). 2 cysteine pairs are disulfide-bonded: C101–C111 and C125–C145.

The protein belongs to the cystatin family. In cartilage, expressed mainly in mature chondrocytes including prehypertrophic and hypertrophic cells (at protein level). Expressed exclusively in cartilage.

It is found in the cytoplasm. Its subcellular location is the cytosol. Functionally, may play a role in the last steps of the chondrocyte differentiation pathway as an inducer of maturation. Induces chondrocyte calcification during endochondral ossification by playing a role in the transcriptional inhibition of ENPP1, a generator of pyrophosphate which inhibits calcification. Possibly impairs the binding of a transcription factor to the ENPP1 promoter. Unlike other cystatins, does not have thiol protease inhibitor activity. The protein is Cystatin-D of Mus musculus (Mouse).